The chain runs to 218 residues: Histidine biosynthesis bifunctional protein HisIE (218 aa).

The interval 1 to 118 is phosphoribosyl-AMP cyclohydrolase; sequence MTDLSELNFD…DAPDTGLDGT (118 aa). Residues 119-218 are phosphoribosyl-ATP pyrophosphohydrolase; that stretch reads LERVYATITE…SGLKGPKEVG (100 aa).

The protein in the N-terminal section; belongs to the PRA-CH family. This sequence in the C-terminal section; belongs to the PRA-PH family.

The protein resides in the cytoplasm. It carries out the reaction 1-(5-phospho-beta-D-ribosyl)-ATP + H2O = 1-(5-phospho-beta-D-ribosyl)-5'-AMP + diphosphate + H(+). The catalysed reaction is 1-(5-phospho-beta-D-ribosyl)-5'-AMP + H2O = 1-(5-phospho-beta-D-ribosyl)-5-[(5-phospho-beta-D-ribosylamino)methylideneamino]imidazole-4-carboxamide. The protein operates within amino-acid biosynthesis; L-histidine biosynthesis; L-histidine from 5-phospho-alpha-D-ribose 1-diphosphate: step 2/9. Its pathway is amino-acid biosynthesis; L-histidine biosynthesis; L-histidine from 5-phospho-alpha-D-ribose 1-diphosphate: step 3/9. This is Histidine biosynthesis bifunctional protein HisIE (hisI) from Deinococcus radiodurans (strain ATCC 13939 / DSM 20539 / JCM 16871 / CCUG 27074 / LMG 4051 / NBRC 15346 / NCIMB 9279 / VKM B-1422 / R1).